A 230-amino-acid chain; its full sequence is Ly6/PLAUR domain-containing protein 8 (230 aa).

Residues 1–20 (MKSFLFAGIVVVLTVAAVDT) form the signal peptide. 13 N-linked (GlcNAc...) asparagine glycosylation sites follow: N37, N44, N74, N77, N90, N106, N110, N132, N137, N156, N168, N181, and N197. Residues 125 to 172 (CPACYGNNETSCNETRKCYGERCVSIIAEFTNETKTLVLKGCSNVSIS) enclose the UPAR/Ly6 domain. S211 is lipidated: GPI-anchor amidated serine. Residues 212 to 230 (QASFTPLALASILLLSLLL) constitute a propeptide, removed in mature form.

The protein belongs to the CNF-like-inhibitor family. In terms of processing, highly N-glycosylated. Not O-glycosylated. Post-translationally, GPI-anchored. The GPI-anchor is cleaved, leading to secretion into the colonic lumen.

The protein resides in the cell membrane. It is found in the secreted. Secreted protein specifically required to prevent invasion of Gram-negative bacteria in the inner mucus layer of the colon epithelium, a portion of the large intestine which is free of commensal microbiota. Prevents invasion of flagellated microbiota by binding to the flagellum of bacteria, such as P.mirabilis, thereby inhibiting bacterial motility in the intestinal lumen. Segregation of intestinal bacteria and epithelial cells in the colon is required to preserve intestinal homeostasis. The polypeptide is Ly6/PLAUR domain-containing protein 8 (LYPD8) (Bos taurus (Bovine)).